A 399-amino-acid chain; its full sequence is MKVFFSIFTLVLFQGTLGADTQGYKWKQLLYNNVTPGSYNPDNMISTAFAYDAEGEKLFLAVPRKLPRVPYTLAEVDTKNSLGVKGKHSPLLNKFSGHKTGKELTSIYQPVIDDCRRLWVVDIGSVEYRSRGAKDYPSHRPAIVAYDLKQPNYPEVVRYYFPTRLVEKPTYFGGFAVDVANPKGDCSETFVYITNFLRGALFIYDHKKQDSWNVTHPTFKAERPTKFDYGGKEYEFKAGIFGITLGDRDSEGNRPAYYLAGSAIKVYSVNTKELKQKGGKLNPELLGNRGKYNDAIALAYDPKTKVIFFAEANTKQVSCWNTQKMPLRMKNTDVVYTSSRFVFGTDISVDSKGGLWFMSNGFPPIRKSEKFKYDFPRYRLMRIMDTQEAIAGTACDMNA.

Positions 1–18 (MKVFFSIFTLVLFQGTLG) are cleaved as a signal peptide. A disulfide bond links cysteine 115 and cysteine 186. Asparagine 213 is a glycosylation site (N-linked (GlcNAc...) asparagine). Cysteine 319 and cysteine 395 form a disulfide bridge. The serotonin site is built by threonine 345, asparagine 360, and phenylalanine 362.

The protein belongs to the major royal jelly protein family. As to expression, salivary gland (at protein level).

The protein resides in the secreted. Functionally, probably modulates blood feeding of sand flies on vertebrate species by binding and sequestering different mediators involved in the host response. Binds biogenic amines. Binds serotonin with high affinity. Binds adrenaline and noradrenaline. Binds dopamine and octopamine. Poorly binds histamine. Induces a delayed type hypersensitivity response in host tissues. Induces systemic Th1 immune response in the host. Immunogenic; elicits antibody production in the host. Functions as a chemoattractant for host neutrophils; likely acts through a G-protein-coupled receptor and effect is dependent on calcium influx. In terms of biological role, (Microbial infection) Modulates infection caused by Leishmania species in the host. The sequence is that of Yellow-related salivary protein LJM11 from Lutzomyia longipalpis (Sand fly).